Reading from the N-terminus, the 425-residue chain is MEKSKELFARACKTIPGGVNSPVRACGSVGTDPCFIARGQGSAIFDADGKQYIDYIGSWGPLILGHRHPAVIKAIEAALANGCTFGAPTELEIDLAEAVVNIMPSVEMVRMVNSGTEATMSAIRLARGATGRDGIVKFDGCYHGHGDSLLVAAGSGVATLGIPGSPGVPDKVAESTASLEYNNIEAVKEYCKKKGDRTAAIIVEPVAGNMGVVAPKPEFIQGLREVCDQYGIVLILDEVMTGFRVALGGAQSLYGVTPDLTTMGKVIGGGLPVGAYGGKRSLMEKIAPSGPVYQAGTLSGNPMAMAAGIATLKEISAPGFYEALEKSSQTLADGLKKAAADAGVEAVISRVGSMQTLFFSAGPVENFEDAKKCDLDRFSKFYQGMRAEGVFLPPSQFEAWFVSSAHTEADIEATLKAAEKVLRQL.

Lys-265 is subject to N6-(pyridoxal phosphate)lysine.

The protein belongs to the class-III pyridoxal-phosphate-dependent aminotransferase family. HemL subfamily. Homodimer. It depends on pyridoxal 5'-phosphate as a cofactor.

Its subcellular location is the cytoplasm. The catalysed reaction is (S)-4-amino-5-oxopentanoate = 5-aminolevulinate. The protein operates within porphyrin-containing compound metabolism; protoporphyrin-IX biosynthesis; 5-aminolevulinate from L-glutamyl-tRNA(Glu): step 2/2. The protein is Glutamate-1-semialdehyde 2,1-aminomutase of Desulfatibacillum aliphaticivorans.